The primary structure comprises 229 residues: Dihydrofolate reductase (229 aa).

A DHFR domain is found at 11-227 (SITAVVAATA…VKYIFEMWVL (217 aa)). NADP(+) is bound by residues A17 and 23 to 29 (GIGLNGG). Substrate is bound at residue 37 to 42 (EMKYFA). 64–66 (RKT) contributes to the NADP(+) binding site. R80 contacts substrate. Residues 86-88 (SGK) and 127-134 (GGATLYTS) contribute to the NADP(+) site.

It belongs to the dihydrofolate reductase family. As to quaternary structure, monomer.

It catalyses the reaction (6S)-5,6,7,8-tetrahydrofolate + NADP(+) = 7,8-dihydrofolate + NADPH + H(+). Its pathway is cofactor biosynthesis; tetrahydrofolate biosynthesis; 5,6,7,8-tetrahydrofolate from 7,8-dihydrofolate: step 1/1. Functionally, key enzyme in folate metabolism. Catalyzes an essential reaction for de novo glycine and purine synthesis, and for DNA precursor synthesis. The chain is Dihydrofolate reductase (DFR1) from Cryptococcus neoformans var. neoformans serotype D (strain JEC21 / ATCC MYA-565) (Filobasidiella neoformans).